Consider the following 122-residue polypeptide: UPF0102 protein CPE1705 (122 aa).

It belongs to the UPF0102 family.

The polypeptide is UPF0102 protein CPE1705 (Clostridium perfringens (strain 13 / Type A)).